The following is a 514-amino-acid chain: GMP synthase [glutamine-hydrolyzing] (514 aa).

In terms of domain architecture, Glutamine amidotransferase type-1 spans 7–197; it reads KVLILDFGSQ…LFNICKCERN (191 aa). Cys-84 (nucleophile) is an active-site residue. Residues His-171 and Glu-173 contribute to the active site. The GMPS ATP-PPase domain maps to 198 to 389; it reads WNMGSFIEYE…LKLPEDIVYR (192 aa). 225–231 is an ATP binding site; sequence SGGVDSS.

As to quaternary structure, homodimer.

It carries out the reaction XMP + L-glutamine + ATP + H2O = GMP + L-glutamate + AMP + diphosphate + 2 H(+). It functions in the pathway purine metabolism; GMP biosynthesis; GMP from XMP (L-Gln route): step 1/1. Catalyzes the synthesis of GMP from XMP. This is GMP synthase [glutamine-hydrolyzing] from Brachyspira hyodysenteriae (strain ATCC 49526 / WA1).